We begin with the raw amino-acid sequence, 189 residues long: Phosphoheptose isomerase (189 aa).

The SIS domain maps to 34–189 (LVAALKGGKK…CDLVEKGLFK (156 aa)). Position 49 to 51 (49 to 51 (NGG)) interacts with substrate. 2 residues coordinate Zn(2+): His58 and Glu62. Residues Glu62, 91 to 92 (ND), 117 to 119 (STS), Ser122, and Gln169 each bind substrate. Zn(2+)-binding residues include Gln169 and His177.

The protein belongs to the SIS family. GmhA subfamily. As to quaternary structure, homotetramer. Zn(2+) serves as cofactor.

The protein resides in the cytoplasm. It carries out the reaction 2 D-sedoheptulose 7-phosphate = D-glycero-alpha-D-manno-heptose 7-phosphate + D-glycero-beta-D-manno-heptose 7-phosphate. The protein operates within carbohydrate biosynthesis; D-glycero-D-manno-heptose 7-phosphate biosynthesis; D-glycero-alpha-D-manno-heptose 7-phosphate and D-glycero-beta-D-manno-heptose 7-phosphate from sedoheptulose 7-phosphate: step 1/1. Its function is as follows. Catalyzes the isomerization of sedoheptulose 7-phosphate in D-glycero-D-manno-heptose 7-phosphate. This chain is Phosphoheptose isomerase, found in Geobacter metallireducens (strain ATCC 53774 / DSM 7210 / GS-15).